The sequence spans 698 residues: MTNGSFRQIINQLDMRWRRRVPVIHQTETAECGLACLAMICGHFGKNIDLISLRRKFNLSARGANLAGINGIAEQLGMVTRALSLELDELGALKMPCILHWDFSHFVVLVSVKRNRYVLHDPARGRRYLGREEMSRYFTGIALEVWPGSEFLAETQQIRISLRSLINSIYGIKRTLAKIFCLSVVIEAINLVMPVGTQLVMDHAIPAGDRGLLTLISAGLMFFILLRAAVSMLRAWSSLVMSTLINIQWQSGLFNHLLRLPLAFFERRKLGDIQSRFGSLDTLRATFTTCVVGAIMDSIMVVGVFVMMLLYGGYLTWIVLGFTMVYVLIRLVTYGYYRQISEETLVRGARASSYFMESLYGIATVKIQGMAGIRGTHWLNLKIDAINSGIKLTKMDLLFGGINTFVAACDQVAILWLGASLVIDNQMTIGMFVAFGSFRGQFSDRVASLTSFLLQLRIMSLHNERIADIALHEKEEKKPEIEIVADMSPVSLETTDLSYRYDSQSAQVFSGLNLSVAPGESVAITGASGAGKTTLMKVLCGLFEPDSGKVLVNGTDIRQLGINNYHRMIACVMQDDRLFSGSIRENICGFAEETDDEWMTECARASHIHDVIMKMPMGYETLIGELGEGLSGGQKQRIFIARALYRKPGILFMDEATSSLDTESERFVNAAIKKMNITRVIIAHRETTLRTVDRIISI.

A Peptidase C39 domain is found at 26-145 (QTETAECGLA…RYFTGIALEV (120 aa)). The active site involves Cys-32. Helical transmembrane passes span 33–53 (GLAC…LISL), 90–110 (LGAL…VVLV), 289–311 (TCVV…MLLY), 315–337 (LTWI…YGYY), and 397–417 (LLFG…ILWL). Residues 176–458 (LAKIFCLSVV…LTSFLLQLRI (283 aa)) enclose the ABC transmembrane type-1 domain. Residues 492-698 (LETTDLSYRY…LRTVDRIISI (207 aa)) form the ABC transporter domain. An ATP-binding site is contributed by 526 to 533 (GASGAGKT).

Belongs to the ABC transporter superfamily.

Its subcellular location is the cell membrane. In terms of biological role, probably involved, in conjunction with MchE, in the secretion of microcin H47. This is Probable microcin-H47 secretion/processing ATP-binding protein MchF (mchF) from Escherichia coli.